The chain runs to 35 residues: UPF0387 membrane protein YohO (35 aa).

Residues 6–26 (IGVIALFLFMAFGGIGGVMLA) traverse the membrane as a helical segment.

The protein belongs to the UPF0387 family.

It localises to the cell inner membrane. The polypeptide is UPF0387 membrane protein YohO (Escherichia coli O8 (strain IAI1)).